A 150-amino-acid chain; its full sequence is MKPADWLILQKKVRFGDCDSAGVIHFHNLLKWSHEAWEESIEIYGIPSQDIFPDFSIRKSQIIFPIVNCEANFLAPIKIGDLLKVKIVPHKINTHLFQVNSFFIKNGNKVAEGKIIHCSLDIDSRDKIELPDQLERWIEASNVSTNLKEC.

Residue aspartate 19 is part of the active site.

This sequence belongs to the 4-hydroxybenzoyl-CoA thioesterase family. DHNA-CoA hydrolase subfamily.

The enzyme catalyses 1,4-dihydroxy-2-naphthoyl-CoA + H2O = 1,4-dihydroxy-2-naphthoate + CoA + H(+). It participates in cofactor biosynthesis; phylloquinone biosynthesis. The protein operates within quinol/quinone metabolism; 1,4-dihydroxy-2-naphthoate biosynthesis; 1,4-dihydroxy-2-naphthoate from chorismate: step 7/7. In terms of biological role, catalyzes the hydrolysis of 1,4-dihydroxy-2-naphthoyl-CoA (DHNA-CoA) to 1,4-dihydroxy-2-naphthoate (DHNA), a reaction involved in phylloquinone (vitamin K1) biosynthesis. The polypeptide is 1,4-dihydroxy-2-naphthoyl-CoA hydrolase (Prochlorococcus marinus (strain AS9601)).